The following is a 292-amino-acid chain: UDP-3-O-acyl-N-acetylglucosamine deacetylase (292 aa).

The Zn(2+) site is built by His76, His232, and Asp236. The Proton donor role is filled by His259.

Belongs to the LpxC family. It depends on Zn(2+) as a cofactor.

The enzyme catalyses a UDP-3-O-[(3R)-3-hydroxyacyl]-N-acetyl-alpha-D-glucosamine + H2O = a UDP-3-O-[(3R)-3-hydroxyacyl]-alpha-D-glucosamine + acetate. It functions in the pathway glycolipid biosynthesis; lipid IV(A) biosynthesis; lipid IV(A) from (3R)-3-hydroxytetradecanoyl-[acyl-carrier-protein] and UDP-N-acetyl-alpha-D-glucosamine: step 2/6. Its function is as follows. Catalyzes the hydrolysis of UDP-3-O-myristoyl-N-acetylglucosamine to form UDP-3-O-myristoylglucosamine and acetate, the committed step in lipid A biosynthesis. The chain is UDP-3-O-acyl-N-acetylglucosamine deacetylase from Thermodesulfovibrio yellowstonii (strain ATCC 51303 / DSM 11347 / YP87).